A 175-amino-acid chain; its full sequence is Cytochrome c-550-like protein (175 aa).

Positions 1-34 are cleaved as a signal peptide; that stretch reads MYQPHFWQRSIGWLCGGLLILLLGWTIAPATALA. Heme c is bound by residues Cys-81, Cys-84, His-85, and Cys-135.

This sequence belongs to the cytochrome c family. PsbV subfamily. Requires heme c as cofactor.

It localises to the cellular thylakoid membrane. Probable low-potential cytochrome c, can partially replace cytochrome c-550 (PsbV) function. This is Cytochrome c-550-like protein from Thermosynechococcus vestitus (strain NIES-2133 / IAM M-273 / BP-1).